A 644-amino-acid chain; its full sequence is Tripeptidyl-peptidase sed1 (644 aa).

The N-terminal stretch at 1-18 (MRLSHVLLGTAAAAGVLA) is a signal peptide. A propeptide spans 19–196 (SPTPNDYVVH…KARSIEKRSF (178 aa)) (removed in mature form). The Peptidase S53 domain maps to 224–643 (AITPLCISAL…PALLDLFMSL (420 aa)). N-linked (GlcNAc...) asparagine glycosylation occurs at Asn-235. Catalysis depends on charge relay system residues Glu-300 and Asp-304. N-linked (GlcNAc...) asparagine glycans are attached at residues Asn-326, Asn-332, and Asn-519. Ser-561 (charge relay system) is an active-site residue. Ca(2+) contacts are provided by Asp-602, Ile-603, Gly-621, and Asp-623.

It depends on Ca(2+) as a cofactor. In terms of processing, N-glycosylated.

The protein localises to the secreted. It localises to the extracellular space. The catalysed reaction is Release of an N-terminal tripeptide from a polypeptide.. In terms of biological role, secreted tripeptidyl-peptidase which degrades proteins at acidic pHs and is involved in virulence. This Aspergillus fumigatus (strain ATCC MYA-4609 / CBS 101355 / FGSC A1100 / Af293) (Neosartorya fumigata) protein is Tripeptidyl-peptidase sed1 (sed1).